The chain runs to 550 residues: Probable methionine--tRNA ligase, cytoplasmic (550 aa).

The 'HIGH' region signature appears at 10–20 (PYVNNQPHLGN). The 'KMSKS' region signature appears at 328–332 (KFSKS). An ATP-binding site is contributed by lysine 331.

Belongs to the class-I aminoacyl-tRNA synthetase family.

The protein localises to the cytoplasm. The catalysed reaction is tRNA(Met) + L-methionine + ATP = L-methionyl-tRNA(Met) + AMP + diphosphate. This chain is Probable methionine--tRNA ligase, cytoplasmic, found in Encephalitozoon cuniculi (strain GB-M1) (Microsporidian parasite).